An 89-amino-acid polypeptide reads, in one-letter code: Small ribosomal subunit protein uS15 (89 aa).

The protein belongs to the universal ribosomal protein uS15 family. In terms of assembly, part of the 30S ribosomal subunit. Forms a bridge to the 50S subunit in the 70S ribosome, contacting the 23S rRNA.

Functionally, one of the primary rRNA binding proteins, it binds directly to 16S rRNA where it helps nucleate assembly of the platform of the 30S subunit by binding and bridging several RNA helices of the 16S rRNA. Its function is as follows. Forms an intersubunit bridge (bridge B4) with the 23S rRNA of the 50S subunit in the ribosome. The chain is Small ribosomal subunit protein uS15 from Arthrobacter sp. (strain FB24).